Here is a 1257-residue protein sequence, read N- to C-terminus: Period circadian protein homolog 2 (1257 aa).

The interval 1–59 (MNGYVDFSPSPTSPTQEPGEPQPTQAVLQEDVDMSSGSSGNENCSTGRDSQGSDCDDSG) is disordered. Low complexity predominate over residues 8-25 (SPSPTSPTQEPGEPQPTQ). Positions 35-53 (SSGSSGNENCSTGRDSQGS) are enriched in polar residues. A Nuclear export signal 1 motif is present at residues 109 to 118 (LIRTLRELKV). The 68-residue stretch at 179-246 (ITSEYIVKNS…FHSYTTPYKL (68 aa)) folds into the PAS 1 domain. The LXXLL motif lies at 306 to 310 (LCCLL). Residues 319 to 385 (YEAPRIPPEK…MLAIHKKILQ (67 aa)) form the PAS 2 domain. The PAC domain occupies 393-436 (YSPIRFRTRNGEYITLDTSWSSFINPWSRKISFIIGRHKVRVGP). A Nuclear export signal 2 motif is present at residues 460–469 (LTEQIHRLLM). The tract at residues 471–567 (PVPHSGSSGY…RDSSGASLPK (97 aa)) is disordered. The tract at residues 478 to 482 (SGYGS) is important for protein stability. Polar residues-rich tracts occupy residues 493–504 (MSQTSSSDSNGQ) and 518–528 (SGKSQSKSHFS). The tract at residues 510–709 (RRSGIFKTSG…DAAGGLSQEK (200 aa)) is CSNK1E binding domain. Phosphoserine is present on residues Ser525, Ser528, Ser531, Ser538, and Ser544. The segment covering 541–555 (EMQSSPPAQVRSVTT) has biased composition (polar residues). Thr554 carries the post-translational modification Phosphothreonine. 6 positions are modified to phosphoserine: Ser659, Ser693, Ser697, Ser706, Ser758, and Ser763. Disordered regions lie at residues 678–706 (DKKPQPELETVEDVASGPESQDDAAGGLS) and 757–833 (RSRA…CPSA). A Nuclear localization signal motif is present at residues 778–794 (KKTGKNRKLKSKRVKTR). The span at 779 to 792 (KTGKNRKLKSKRVK) shows a compositional bias: basic residues. Positions 821–832 (SPSDTSQSSCPS) are enriched in low complexity. Thr858 is modified (phosphothreonine). An interaction with PPARG region spans residues 882–1067 (EFAVQPLPFA…DLCSATGSAL (186 aa)). Ser939 bears the Phosphoserine mark. Position 964 is a phosphothreonine (Thr964). Ser971 is subject to Phosphoserine. The short motif at 983–990 (LQLNLLQL) is the Nuclear export signal 3 element. Residues 993 to 1044 (APESSTGAAGTLGTTGTAASGLDCTSGASRDRQPKAPPTCSEPSDTQNSDAI) form a disordered region. The span at 996 to 1014 (SSTGAAGTLGTTGTAASGL) shows a compositional bias: low complexity. The segment covering 1033-1044 (SEPSDTQNSDAI) has biased composition (polar residues). The LXXLL motif lies at 1051–1055 (LNLLL). A compositionally biased stretch (low complexity) spans 1070 to 1089 (SGASATSDSLGSSSLGCDTS). The interval 1070-1108 (SGASATSDSLGSSSLGCDTSRSGAGSSDTSHTSKYFGSI) is disordered. Polar residues predominate over residues 1090 to 1108 (RSGAGSSDTSHTSKYFGSI). A Phosphoserine modification is found at Ser1126. The tract at residues 1157–1257 (SRDLQAVLKE…LANPRKEAQT (101 aa)) is CRY binding domain. The interval 1226-1257 (EEDSPSLGLCDTSEAKEEESGQLANPRKEAQT) is disordered.

As to quaternary structure, homodimer. Component of the circadian core oscillator, which includes the CRY proteins, CLOCK or NPAS2, BMAL1 or BMAL2, CSNK1D and/or CSNK1E, TIMELESS, and the PER proteins. Interacts with CLOCK-BMAL1 (off DNA). Interacts directly with PER1 and PER3, and through a C-terminal domain, with CRY1 and CRY2. Interacts (via PAS 2 domain) with TIMELESS. Interacts with NFIL3. Different large complexes have been identified with different repressive functions. The core of PER complexes is composed of at least PER1, PER2, PER3, CRY1, CRY2, CSNK1D and/or CSNK1E. The large PER complex involved in the repression of transcriptional termination is composed of at least PER2, CDK9, DDX5, DHX9, NCBP1 and POLR2A (active). The large PER complex involved in the histone deacetylation is composed of at least HDAC1, PER2, SFPQ and SIN3A. The large PER complex involved in the histone methylation is composed of at least PER2, CBX3, TRIM28, SUV39H1 and/or SUV39H2; CBX3 mediates the formation of the complex. Interacts with SETX; the interaction inhibits termination of circadian target genes. Interacts with the nuclear receptors HNF4A, NR1D1, NR4A2, RORA, PPARA, PPARG and THRA; the interaction with at least PPARG is ligand dependent. Interacts with PML. Interacts (phosphorylated) with BTRC and FBXW11; the interactions trigger proteasomal degradation. Interacts with NONO and SFPQ. Interacts with CAVIN3. Interacts with MAGEL2. Interacts with MAP1LC3B. Interacts with HNF4A. In terms of processing, acetylated. Deacetylated by SIRT1, resulting in decreased protein stability. Deacetylated by SIRT6, preventing its degradation by the proteasome, resulting in increased protein stability. Phosphorylated by CSNK1E and CSNK1D. Phosphorylation results in PER2 protein degradation. May be dephosphorylated by PP1. Post-translationally, ubiquitinated, leading to its proteasomal degradation. Ubiquitination may be inhibited by CRY1. Expressed in all tissues examined including eye, brain, heart, lung, spleen, liver, pancreas and kidney. In the CNS, highly expressed in the SCN, internal granular layer of granular cells of the olfactory bulb, tuberculum olfactorium, piriform cortex, gyrus dentatus of the hippocampus, cerebellum, pars tuberalis/median eminence, and pituitary, and moderately in the tenia tecta, caudate putamen, accumbens nucleus, superior and inferior colliculus and pineal gland.

It localises to the nucleus. The protein localises to the cytoplasm. Its subcellular location is the perinuclear region. In terms of biological role, transcriptional repressor which forms a core component of the circadian clock. The circadian clock, an internal time-keeping system, regulates various physiological processes through the generation of approximately 24 hour circadian rhythms in gene expression, which are translated into rhythms in metabolism and behavior. It is derived from the Latin roots 'circa' (about) and 'diem' (day) and acts as an important regulator of a wide array of physiological functions including metabolism, sleep, body temperature, blood pressure, endocrine, immune, cardiovascular, and renal function. Consists of two major components: the central clock, residing in the suprachiasmatic nucleus (SCN) of the brain, and the peripheral clocks that are present in nearly every tissue and organ system. Both the central and peripheral clocks can be reset by environmental cues, also known as Zeitgebers (German for 'timegivers'). The predominant Zeitgeber for the central clock is light, which is sensed by retina and signals directly to the SCN. The central clock entrains the peripheral clocks through neuronal and hormonal signals, body temperature and feeding-related cues, aligning all clocks with the external light/dark cycle. Circadian rhythms allow an organism to achieve temporal homeostasis with its environment at the molecular level by regulating gene expression to create a peak of protein expression once every 24 hours to control when a particular physiological process is most active with respect to the solar day. Transcription and translation of core clock components (CLOCK, NPAS2, BMAL1, BMAL2, PER1, PER2, PER3, CRY1 and CRY2) plays a critical role in rhythm generation, whereas delays imposed by post-translational modifications (PTMs) are important for determining the period (tau) of the rhythms (tau refers to the period of a rhythm and is the length, in time, of one complete cycle). A diurnal rhythm is synchronized with the day/night cycle, while the ultradian and infradian rhythms have a period shorter and longer than 24 hours, respectively. Disruptions in the circadian rhythms contribute to the pathology of cardiovascular diseases, cancer, metabolic syndrome and aging. A transcription/translation feedback loop (TTFL) forms the core of the molecular circadian clock mechanism. Transcription factors, CLOCK or NPAS2 and BMAL1 or BMAL2, form the positive limb of the feedback loop, act in the form of a heterodimer and activate the transcription of core clock genes and clock-controlled genes (involved in key metabolic processes), harboring E-box elements (5'-CACGTG-3') within their promoters. The core clock genes: PER1/2/3 and CRY1/2 which are transcriptional repressors form the negative limb of the feedback loop and interact with the CLOCK|NPAS2-BMAL1|BMAL2 heterodimer inhibiting its activity and thereby negatively regulating their own expression. This heterodimer also activates nuclear receptors NR1D1/2 and RORA/B/G, which form a second feedback loop and which activate and repress BMAL1 transcription, respectively. PER1 and PER2 proteins transport CRY1 and CRY2 into the nucleus with appropriate circadian timing, but also contribute directly to repression of clock-controlled target genes through interaction with several classes of RNA-binding proteins, helicases and others transcriptional repressors. PER appears to regulate circadian control of transcription by at least three different modes. First, interacts directly with the CLOCK-BMAL1 at the tail end of the nascent transcript peak to recruit complexes containing the SIN3-HDAC that remodel chromatin to repress transcription. Second, brings H3K9 methyltransferases such as SUV39H1 and SUV39H2 to the E-box elements of the circadian target genes, like PER2 itself or PER1. The recruitment of each repressive modifier to the DNA seems to be very precisely temporally orchestrated by the large PER complex, the deacetylases acting before than the methyltransferases. Additionally, large PER complexes are also recruited to the target genes 3' termination site through interactions with RNA-binding proteins and helicases that may play a role in transcription termination to regulate transcription independently of CLOCK-BMAL1 interactions. Recruitment of large PER complexes to the elongating polymerase at PER and CRY termination sites inhibited SETX action, impeding RNA polymerase II release and thereby repressing transcriptional reinitiation. May propagate clock information to metabolic pathways via the interaction with nuclear receptors. Coactivator of PPARA and corepressor of NR1D1, binds rhythmically at the promoter of nuclear receptors target genes like BMAL1 or G6PC1. Directly and specifically represses PPARG proadipogenic activity by blocking PPARG recruitment to target promoters and thereby transcriptional activation. Required for fatty acid and lipid metabolism, is involved as well in the regulation of circulating insulin levels. Plays an important role in the maintenance of cardiovascular functions through the regulation of NO and vasodilatatory prostaglandins production in aortas. Controls circadian glutamate uptake in synaptic vesicles through the regulation of VGLUT1 expression. May also be involved in the regulation of inflammatory processes. Represses the CLOCK-BMAL1 induced transcription of BHLHE40/DEC1 and ATF4. Negatively regulates the formation of the TIMELESS-CRY1 complex by competing with TIMELESS for binding to CRY1. The protein is Period circadian protein homolog 2 of Rattus norvegicus (Rat).